An 827-amino-acid polypeptide reads, in one-letter code: Glycerol-3-phosphate acyltransferase (827 aa).

An HXXXXD motif motif is present at residues 325 to 330 (CHRSHM).

It belongs to the GPAT/DAPAT family.

It localises to the cell inner membrane. It carries out the reaction sn-glycerol 3-phosphate + an acyl-CoA = a 1-acyl-sn-glycero-3-phosphate + CoA. It participates in phospholipid metabolism; CDP-diacylglycerol biosynthesis; CDP-diacylglycerol from sn-glycerol 3-phosphate: step 1/3. The sequence is that of Glycerol-3-phosphate acyltransferase from Shigella dysenteriae serotype 1 (strain Sd197).